We begin with the raw amino-acid sequence, 122 residues long: Large ribosomal subunit protein uL14 (122 aa).

This sequence belongs to the universal ribosomal protein uL14 family. As to quaternary structure, part of the 50S ribosomal subunit. Forms a cluster with proteins L3 and L19. In the 70S ribosome, L14 and L19 interact and together make contacts with the 16S rRNA in bridges B5 and B8.

In terms of biological role, binds to 23S rRNA. Forms part of two intersubunit bridges in the 70S ribosome. The protein is Large ribosomal subunit protein uL14 of Wolinella succinogenes (strain ATCC 29543 / DSM 1740 / CCUG 13145 / JCM 31913 / LMG 7466 / NCTC 11488 / FDC 602W) (Vibrio succinogenes).